Consider the following 442-residue polypeptide: Tubulin beta chain (442 aa).

Residues glutamine 11, glutamate 69, serine 138, glycine 142, threonine 143, glycine 144, asparagine 204, and asparagine 226 each contribute to the GTP site. Glutamate 69 provides a ligand contact to Mg(2+).

It belongs to the tubulin family. Dimer of alpha and beta chains. A typical microtubule is a hollow water-filled tube with an outer diameter of 25 nm and an inner diameter of 15 nM. Alpha-beta heterodimers associate head-to-tail to form protofilaments running lengthwise along the microtubule wall with the beta-tubulin subunit facing the microtubule plus end conferring a structural polarity. Microtubules usually have 13 protofilaments but different protofilament numbers can be found in some organisms and specialized cells. Mg(2+) is required as a cofactor.

The protein resides in the cytoplasm. It localises to the cytoskeleton. In terms of biological role, tubulin is the major constituent of microtubules, a cylinder consisting of laterally associated linear protofilaments composed of alpha- and beta-tubulin heterodimers. Microtubules grow by the addition of GTP-tubulin dimers to the microtubule end, where a stabilizing cap forms. Below the cap, tubulin dimers are in GDP-bound state, owing to GTPase activity of alpha-tubulin. This is Tubulin beta chain (TUB-B) from Pneumocystis carinii.